The chain runs to 320 residues: Ribosomal protein L11 methyltransferase (320 aa).

S-adenosyl-L-methionine-binding residues include Thr165, Gly186, Asp208, and Asn251.

Belongs to the methyltransferase superfamily. PrmA family.

It localises to the cytoplasm. The catalysed reaction is L-lysyl-[protein] + 3 S-adenosyl-L-methionine = N(6),N(6),N(6)-trimethyl-L-lysyl-[protein] + 3 S-adenosyl-L-homocysteine + 3 H(+). Its function is as follows. Methylates ribosomal protein L11. This chain is Ribosomal protein L11 methyltransferase, found in Limosilactobacillus fermentum (strain NBRC 3956 / LMG 18251) (Lactobacillus fermentum).